The following is a 171-amino-acid chain: Shikimate kinase (171 aa).

14-19 provides a ligand contact to ATP; it reads GAGKST. S18 lines the Mg(2+) pocket. Residues D36, R60, and G82 each coordinate substrate. R120 serves as a coordination point for ATP. Residue R139 coordinates substrate. Q156 contacts ATP.

The protein belongs to the shikimate kinase family. Monomer. Mg(2+) serves as cofactor.

It is found in the cytoplasm. It catalyses the reaction shikimate + ATP = 3-phosphoshikimate + ADP + H(+). Its pathway is metabolic intermediate biosynthesis; chorismate biosynthesis; chorismate from D-erythrose 4-phosphate and phosphoenolpyruvate: step 5/7. Functionally, catalyzes the specific phosphorylation of the 3-hydroxyl group of shikimic acid using ATP as a cosubstrate. The polypeptide is Shikimate kinase (Shewanella amazonensis (strain ATCC BAA-1098 / SB2B)).